The following is a 1603-amino-acid chain: Pentafunctional AROM polypeptide (1603 aa).

The interval 1–384 (MGVPTKISIL…YEPRASTVSN (384 aa)) is 3-dehydroquinate synthase. Residues 44-46 (DTN), 81-84 (ESSK), 114-116 (GGV), and Asp119 each bind NAD(+). Position 130 (Arg130) interacts with 7-phospho-2-dehydro-3-deoxy-D-arabino-heptonate. An NAD(+)-binding site is contributed by 139–140 (TT). Positions 146 and 152 each coordinate 7-phospho-2-dehydro-3-deoxy-D-arabino-heptonate. Residue Lys161 participates in NAD(+) binding. A 7-phospho-2-dehydro-3-deoxy-D-arabino-heptonate-binding site is contributed by Asn162. Residues 179–182 (FLNT) and Asn190 each bind NAD(+). Glu194 contributes to the Zn(2+) binding site. 7-phospho-2-dehydro-3-deoxy-D-arabino-heptonate-binding positions include 194–197 (EVIK) and Lys250. The active-site Proton acceptor; for 3-dehydroquinate synthase activity is the Glu260. 7-phospho-2-dehydro-3-deoxy-D-arabino-heptonate is bound by residues 264–268 (RNLLN) and His271. His271 provides a ligand contact to Zn(2+). The active-site Proton acceptor; for 3-dehydroquinate synthase activity is the His275. His287 and Lys356 together coordinate 7-phospho-2-dehydro-3-deoxy-D-arabino-heptonate. Residue His287 coordinates Zn(2+). The interval 397-842 (VYPGFPKSLN…WNTLAQTFKV (446 aa)) is EPSP synthase. Catalysis depends on Cys824, which acts as the For EPSP synthase activity. A shikimate kinase region spans residues 872–1064 (AASIFIIGMR…RRKENTFFVS (193 aa)). An ATP-binding site is contributed by 879–886 (GMRGAGKT). A 3-dehydroquinase region spans residues 1065 to 1285 (LTFPDLTPAS…AAPGQLSARE (221 aa)). Catalysis depends on His1188, which acts as the Proton acceptor; for 3-dehydroquinate dehydratase activity. The active-site Schiff-base intermediate with substrate; for 3-dehydroquinate dehydratase activity is Lys1216. The shikimate dehydrogenase stretch occupies residues 1298–1603 (AKKFAVIGKP…GVSSSDDTIS (306 aa)).

This sequence in the N-terminal section; belongs to the sugar phosphate cyclases superfamily. Dehydroquinate synthase family. The protein in the 2nd section; belongs to the EPSP synthase family. It in the 3rd section; belongs to the shikimate kinase family. In the 4th section; belongs to the type-I 3-dehydroquinase family. This sequence in the C-terminal section; belongs to the shikimate dehydrogenase family. In terms of assembly, homodimer. Requires Zn(2+) as cofactor.

It is found in the cytoplasm. It catalyses the reaction 7-phospho-2-dehydro-3-deoxy-D-arabino-heptonate = 3-dehydroquinate + phosphate. It carries out the reaction 3-dehydroquinate = 3-dehydroshikimate + H2O. The enzyme catalyses shikimate + NADP(+) = 3-dehydroshikimate + NADPH + H(+). The catalysed reaction is shikimate + ATP = 3-phosphoshikimate + ADP + H(+). It catalyses the reaction 3-phosphoshikimate + phosphoenolpyruvate = 5-O-(1-carboxyvinyl)-3-phosphoshikimate + phosphate. The protein operates within metabolic intermediate biosynthesis; chorismate biosynthesis; chorismate from D-erythrose 4-phosphate and phosphoenolpyruvate: step 2/7. It participates in metabolic intermediate biosynthesis; chorismate biosynthesis; chorismate from D-erythrose 4-phosphate and phosphoenolpyruvate: step 3/7. It functions in the pathway metabolic intermediate biosynthesis; chorismate biosynthesis; chorismate from D-erythrose 4-phosphate and phosphoenolpyruvate: step 4/7. Its pathway is metabolic intermediate biosynthesis; chorismate biosynthesis; chorismate from D-erythrose 4-phosphate and phosphoenolpyruvate: step 5/7. The protein operates within metabolic intermediate biosynthesis; chorismate biosynthesis; chorismate from D-erythrose 4-phosphate and phosphoenolpyruvate: step 6/7. In terms of biological role, the AROM polypeptide catalyzes 5 consecutive enzymatic reactions in prechorismate polyaromatic amino acid biosynthesis. In Paracoccidioides brasiliensis (strain Pb03), this protein is Pentafunctional AROM polypeptide.